The primary structure comprises 152 residues: Natriuretic peptides A (152 aa).

The signal sequence occupies residues 1 to 24 (MGSSAITVSFLLFLAFQLPGQTGA). 2 propeptides span residues 25–122 (NPVY…TAPR) and 92–102 (EGGVLGRGPWE). Residues 58 to 101 (PSQVLSEQNEEAGAPLSPLSEMPPWMGEVNPAQREGGVLGRGPW) form a disordered region. S128 is subject to Phosphoserine. A disulfide bridge connects residues C129 and C145. Residues 146–150 (NSFRY) form an important for degradation of atrial natriuretic peptide by IDE region.

It belongs to the natriuretic peptide family. Homodimer; disulfide-linked antiparallel dimer. Post-translationally, the precursor molecule is proteolytically cleaved by CORIN at Arg-122 to produce the atrial natriuretic peptide. Undergoes further proteolytic cleavage by unknown proteases to give rise to long-acting natriuretic peptide, vessel dilator and kaliuretic peptide. Additional processing gives rise to the auriculin and atriopeptin peptides. In the kidneys, alternative processing by an unknown protease results in the peptide urodilatin. Cleavage by MME initiates degradation of the factor and thereby regulates its activity. Degradation by IDE results in reduced activation of NPR1 (in vitro). During IDE degradation, the resulting products can temporarily stimulate NPR2 to produce cGMP, before the fragments are completely degraded and inactivated by IDE (in vitro). In terms of processing, degraded by IDE. Post-translationally, phosphorylation on Ser-128 decreases vasorelaxant activity.

The protein localises to the secreted. The protein resides in the perikaryon. Its subcellular location is the cell projection. Its function is as follows. Hormone that plays a key role in mediating cardio-renal homeostasis, and is involved in vascular remodeling and regulating energy metabolism. Acts by specifically binding and stimulating NPR1 to produce cGMP, which in turn activates effector proteins, such as PRKG1, that drive various biological responses. Regulates vasodilation, natriuresis, diuresis and aldosterone synthesis and is therefore essential for regulating blood pressure, controlling the extracellular fluid volume and maintaining the fluid-electrolyte balance. Also involved in inhibiting cardiac remodeling and cardiac hypertrophy by inducing cardiomyocyte apoptosis and attenuating the growth of cardiomyocytes and fibroblasts. Plays a role in female pregnancy by promoting trophoblast invasion and spiral artery remodeling in uterus, and thus prevents pregnancy-induced hypertension. In adipose tissue, acts in various cGMP- and PKG-dependent pathways to regulate lipid metabolism and energy homeostasis. This includes up-regulating lipid metabolism and mitochondrial oxygen utilization by activating the AMP-activated protein kinase (AMPK), and increasing energy expenditure by acting via MAPK11 to promote the UCP1-dependent thermogenesis of brown adipose tissue. Binds the clearance receptor NPR3 which removes the hormone from circulation. May have a role in cardio-renal homeostasis through regulation of natriuresis, diuresis, vasodilation, and inhibiting aldosterone synthesis. In vitro, promotes the production of cGMP and induces vasodilation. May promote natriuresis, at least in part, by enhancing prostaglandin E2 synthesis resulting in the inhibition of renal Na+-K+-ATPase. However reports on the involvement of this peptide in mammal blood volume and blood pressure homeostasis are conflicting; according to a report, in vivo it is not sufficient to activate cGMP and does not inhibit collecting duct transport nor effect diuresis and natriuresis. Appears to bind to specific receptors that are distinct from the receptors bound by atrial natriuretic peptide and vessel dilator. Possibly enhances protein excretion in urine by decreasing proximal tubular protein reabsorption. Functionally, may have a role in cardio-renal homeostasis through regulation of natriuresis, diuresis, and vasodilation. In vitro, promotes the production of cGMP and induces vasodilation. May promote natriuresis, at least in part, by enhancing prostaglandin E2 synthesis resulting in the inhibition of renal Na+-K+-ATPase. However reports on the involvement of this peptide in mammal blood volume and blood pressure homeostasis are conflicting; according to a report it is not sufficient to activate cGMP and does not inhibit collecting duct transport nor effect diuresis and natriuresis. Appears to bind to specific receptors that are distinct from the receptors bound by the atrial natriuretic and long-acting natriuretic peptides. Possibly functions in protein excretion in urine by maintaining the integrity of the proximal tubules and enhancing protein excretion by decreasing proximal tubular protein reabsorption. In terms of biological role, may have a role in cardio-renal homeostasis through regulation of diuresis and inhibiting aldosterone synthesis. In vitro, promotes the production of cGMP and induces vasodilation. May promote natriuresis, at least in part, by enhancing prostaglandin E2 synthesis resulting in the inhibition of renal Na+-K+-ATPase. May have a role in potassium excretion but not sodium excretion (natriuresis). Possibly enhances protein excretion in urine by decreasing proximal tubular protein reabsorption. Its function is as follows. Hormone produced in the kidneys that appears to be important for maintaining cardio-renal homeostasis. Mediates vasodilation, natriuresis and diuresis primarily in the renal system, in order to maintain the extracellular fluid volume and control the fluid-electrolyte balance. Specifically binds and stimulates cGMP production by renal transmembrane receptors, likely NPR1. Urodilatin not ANP, may be the natriuretic peptide responsible for the regulation of sodium and water homeostasis in the kidney. May have a role in cardio-renal homeostasis through regulation of natriuresis and vasodilation. In vivo promotes natriuresis and in vitro, vasodilates renal artery strips. Functionally, may have a role in cardio-renal homeostasis through regulation of regulation of natriuresis and vasodilation. In vivo promotes natriuresis. In vitro, vasodilates intestinal smooth muscle but not smooth muscle strips. In terms of biological role, may have a role in cardio-renal homeostasis through regulation of natriuresis and vasodilation. In vivo promotes natriuresis. In vitro, selectively vasodilates intestinal and vascular smooth muscle strips. Its function is as follows. May have a role in cardio-renal homeostasis through regulation of natriuresis and vasodilation. In vivo promotes natriuresis. In vitro, selectively vasodilates intestinal smooth muscle but not vascular smooth muscle strips. In Bos taurus (Bovine), this protein is Natriuretic peptides A (NPPA).